A 282-amino-acid chain; its full sequence is Bifunctional protein FolD (282 aa).

NADP(+) contacts are provided by residues 165–167, Ser-190, and Ile-231; that span reads NRS.

It belongs to the tetrahydrofolate dehydrogenase/cyclohydrolase family. In terms of assembly, homodimer.

The enzyme catalyses (6R)-5,10-methylene-5,6,7,8-tetrahydrofolate + NADP(+) = (6R)-5,10-methenyltetrahydrofolate + NADPH. It catalyses the reaction (6R)-5,10-methenyltetrahydrofolate + H2O = (6R)-10-formyltetrahydrofolate + H(+). It participates in one-carbon metabolism; tetrahydrofolate interconversion. Functionally, catalyzes the oxidation of 5,10-methylenetetrahydrofolate to 5,10-methenyltetrahydrofolate and then the hydrolysis of 5,10-methenyltetrahydrofolate to 10-formyltetrahydrofolate. This Clostridium botulinum (strain Okra / Type B1) protein is Bifunctional protein FolD.